The following is an 813-amino-acid chain: Calpain-7 (813 aa).

N-acetylmethionine is present on methionine 1. Phosphothreonine is present on threonine 95. In terms of domain architecture, Calpain catalytic spans 232–540; sequence RERFAYPMPF…YDVIYLSWNP (309 aa). Catalysis depends on residues cysteine 290, histidine 458, and asparagine 478. Positions 541–701 are domain III; sequence GLFKESTCIH…INGKWSGQSA (161 aa). The tract at residues 702–813 is domain N; that stretch reads GGCGNFQETH…IIPIKITQLQ (112 aa).

Belongs to the peptidase C2 family. As to expression, ubiquitous.

It is found in the nucleus. Calcium-regulated non-lysosomal thiol-protease. The chain is Calpain-7 (CAPN7) from Homo sapiens (Human).